The following is a 238-amino-acid chain: Proteasome subunit beta type-6 (238 aa).

A2 carries the post-translational modification N-acetylalanine. Residues 2 to 33 (AAALAVRGAVSAPAFGPEALTPDWENREVSTG) constitute a propeptide, removed in mature form. T34 acts as the Nucleophile in catalysis. The residue at position 68 (T68) is a Phosphothreonine.

It belongs to the peptidase T1B family. The 26S proteasome consists of a 20S proteasome core and two 19S regulatory subunits. The 20S proteasome core is a barrel-shaped complex made of 28 subunits that are arranged in four stacked rings. The two outer rings are each formed by seven alpha subunits, and the two inner rings are formed by seven beta subunits. The proteolytic activity is exerted by three beta-subunits PSMB5, PSMB6 and PSMB7.

It is found in the cytoplasm. The protein resides in the nucleus. It catalyses the reaction Cleavage of peptide bonds with very broad specificity.. Its function is as follows. Component of the 20S core proteasome complex involved in the proteolytic degradation of most intracellular proteins. This complex plays numerous essential roles within the cell by associating with different regulatory particles. Associated with two 19S regulatory particles, forms the 26S proteasome and thus participates in the ATP-dependent degradation of ubiquitinated proteins. The 26S proteasome plays a key role in the maintenance of protein homeostasis by removing misfolded or damaged proteins that could impair cellular functions, and by removing proteins whose functions are no longer required. Associated with the PA200 or PA28, the 20S proteasome mediates ubiquitin-independent protein degradation. This type of proteolysis is required in several pathways including spermatogenesis (20S-PA200 complex) or generation of a subset of MHC class I-presented antigenic peptides (20S-PA28 complex). Within the 20S core complex, PSMB6 displays a peptidylglutamyl-hydrolyzing activity also termed postacidic or caspase-like activity, meaning that the peptides bond hydrolysis occurs directly after acidic residues. The sequence is that of Proteasome subunit beta type-6 (Psmb6) from Rattus norvegicus (Rat).